Reading from the N-terminus, the 2248-residue chain is Zinc finger protein 407 (2248 aa).

Residues 1–32 (MMDSENKPENDEDEKINKEAQDLTKLSSHNED) show a composition bias toward basic and acidic residues. The interval 1-84 (MMDSENKPEN…RRKLDEAEPL (84 aa)) is disordered. 3 consecutive C2H2-type zinc fingers follow at residues 186–208 (LKCSICGHLFSSCSDLEKHAESH), 215–238 (HTCCHCSHKAESSSALHMHIKQAH), and 244–268 (FSCDLCGFQCSEENLLNAHYLGKTH). 2 disordered regions span residues 291–322 (KKSRTMATKNVHSKPRTSKSIAKNSDSKGLRN) and 494–515 (SETQEAEQGQGSARPPDSGLHS). Positions 494–504 (SETQEAEQGQG) are enriched in polar residues. 3 consecutive C2H2-type zinc fingers follow at residues 528–551 (CACTDCGQVATNRTDLEIHVKRCH), 557–581 (FYCRTCDFSSMSRRDLDEHLHSNQH), and 615–639 (FLCTPCNLFFLSEKDVEEHKATEKH). A disordered region spans residues 667–700 (ESENAKESMDDSGKASQEEPLKSRVSHGNEVRHS). Residues 669–699 (ENAKESMDDSGKASQEEPLKSRVSHGNEVRH) are compositionally biased toward basic and acidic residues. The C2H2-type 7 zinc-finger motif lies at 705 to 728 (FQCKKCFYKTRSSTVLTRHIKLRH). The segment at 821–847 (LSQSGGSTKDDELASTTTPKRGRPKGN) is disordered. C2H2-type zinc fingers lie at residues 850-873 (RTCSHCGLLASSITNLTVHIRRKH) and 879-903 (YLCKVCKYYTVTKGDMERHCATKKH). The disordered stretch occupies residues 910 to 962 (EASGKHSSDIIVGPEGGSLEAGKKNAGSAVTMSDEHANKPAESPTSVLEKPDR). 2 C2H2-type zinc fingers span residues 1017–1040 (NKCLHCEFSAHSSASLELHVKRKH) and 1046–1070 (FYCMACDYYAVTRREMTRHAATEKH). A Phosphoserine modification is found at serine 1262. C2H2-type zinc fingers lie at residues 1444–1468 (FHCLLCGKSFYTESNLHQHLASAGH) and 1486–1509 (FKCVKCTEPFDSEQNLFLHIKGQH). The segment at 1537–1561 (NVCKYCGKMCRSSNSMAFLAHIRTH) adopts a C2H2-type 14; degenerate zinc-finger fold. C2H2-type zinc fingers lie at residues 1567 to 1589 (FKCKICHFATAQLGDARNHVKRH), 1595 to 1618 (YKCHVCGVAFVMKKHLNTHLLGKH), 1628 to 1650 (FTCHLCDRSFTEKWALNNHMKLH), 1656 to 1680 (FKCTWPTCHYSFLTASAMKDHYRTH), 1686 to 1708 (FLCDLCGFAGGTRHALTKHRRQH), 1714 to 1736 (FKCDECNFASTTQSHLTRHKRVH), 1742 to 1767 (YRCPWCDYRSNCAENIRKHILHTGKH), and 1773 to 1796 (YNCPKCDYGTNVPVEFRNHLKEQH).

The protein resides in the nucleus. Its function is as follows. May be involved in transcriptional regulation. The sequence is that of Zinc finger protein 407 (ZNF407) from Homo sapiens (Human).